We begin with the raw amino-acid sequence, 152 residues long: Transcriptional repressor NrdR (152 aa).

The segment at 3–34 is a zinc-finger region; sequence CPACQHNGTRVLDSRPVDEGRSIRRRRECESC. The ATP-cone domain occupies 49–139; that stretch reads LIVVKKEGIR…VYRQFKDINV (91 aa).

This sequence belongs to the NrdR family. Zn(2+) is required as a cofactor.

Its function is as follows. Negatively regulates transcription of bacterial ribonucleotide reductase nrd genes and operons by binding to NrdR-boxes. This chain is Transcriptional repressor NrdR, found in Bacillus licheniformis (strain ATCC 14580 / DSM 13 / JCM 2505 / CCUG 7422 / NBRC 12200 / NCIMB 9375 / NCTC 10341 / NRRL NRS-1264 / Gibson 46).